The primary structure comprises 121 residues: uncharacterized protein (121 aa).

3 helical membrane-spanning segments follow: residues 1-21 (MILW…IMPV), 55-75 (LKYI…FCSI), and 92-112 (LFFK…IHFL).

It localises to the membrane. This is an uncharacterized protein from Saccharomyces cerevisiae (strain ATCC 204508 / S288c) (Baker's yeast).